The primary structure comprises 305 residues: HTH-type transcriptional regulator KdgR (305 aa).

Residues 55–116 (VSSVLKVFGI…GESEKYSLTL (62 aa)) enclose the HTH iclR-type domain. The segment at residues 76–95 (ITELSQRVMMSKSTVYRFLQ) is a DNA-binding region (H-T-H motif). One can recognise an IclR-ED domain in the interval 131 to 300 (LIRSADIQMR…ARNISDQMGY (170 aa)).

Homodimer.

Its subcellular location is the cytoplasm. In terms of biological role, transcriptional repressor that negatively regulates the expression of genes involved in pectinolysis and in pectinase secretion. Controls genes involved in pectin catabolism, including the pectinase genes (pelA, pelB, pelC, pelE), genes involved in pectin catabolism (kdgT, ogl, kduI-kdgF) and the outT gene involved in pectinase secretion. Acts by binding directly to KdgR binding sites (KdgR-box) in the gene operator/promoter region. The polypeptide is HTH-type transcriptional regulator KdgR (Dickeya chrysanthemi (Pectobacterium chrysanthemi)).